Reading from the N-terminus, the 118-residue chain is Large ribosomal subunit protein bL21c (118 aa).

It belongs to the bacterial ribosomal protein bL21 family. Part of the 50S ribosomal subunit.

Its subcellular location is the plastid. The protein localises to the chloroplast. This protein binds to 23S rRNA. The protein is Large ribosomal subunit protein bL21c of Anthoceros angustus (Hornwort).